The sequence spans 240 residues: Transcriptional regulatory protein BaeR (240 aa).

One can recognise a Response regulatory domain in the interval 12-125 (RILIVEDEPK…EVVARVKTIL (114 aa)). At aspartate 61 the chain carries 4-aspartylphosphate. Residues 131–234 (QRELQQQDAE…VYGVGYRWEA (104 aa)) constitute a DNA-binding region (ompR/PhoB-type).

Post-translationally, phosphorylated by BaeS.

Its subcellular location is the cytoplasm. Its function is as follows. Member of the two-component regulatory system BaeS/BaeR. Activates the mdtABCD operon. The sequence is that of Transcriptional regulatory protein BaeR (baeR) from Escherichia coli O6:H1 (strain CFT073 / ATCC 700928 / UPEC).